The primary structure comprises 37 residues: Photosystem II reaction center protein Y (37 aa).

Residues 4-22 (AIVVFAPIIAAVAWVVFNI) form a helical membrane-spanning segment.

The protein belongs to the PsbY family. As to quaternary structure, PSII is composed of 1 copy each of membrane proteins PsbA, PsbB, PsbC, PsbD, PsbE, PsbF, PsbH, PsbI, PsbJ, PsbK, PsbL, PsbM, PsbT, PsbX, PsbY, Psb30/Ycf12, peripheral proteins PsbO, CyanoQ (PsbQ), PsbU, PsbV and a large number of cofactors. It forms dimeric complexes.

It localises to the cellular thylakoid membrane. In terms of biological role, loosely associated component of the core of photosystem II (PSII), it is not always seen in crystals. PSII is a light-driven water plastoquinone oxidoreductase, using light energy to abstract electrons from H(2)O, generating a proton gradient subsequently used for ATP formation. This is Photosystem II reaction center protein Y from Prochlorococcus marinus (strain MIT 9312).